The following is a 583-amino-acid chain: Aspartate--tRNA ligase (583 aa).

Glu174 lines the L-aspartate pocket. Residues 198–201 (QITK) form an aspartate region. Arg220 contributes to the L-aspartate binding site. Residues 220-222 (RDE) and Gln229 each bind ATP. His443 is a binding site for L-aspartate. Position 477 (Glu477) interacts with ATP. Residue Arg484 coordinates L-aspartate. An ATP-binding site is contributed by 529-532 (GLDR).

Belongs to the class-II aminoacyl-tRNA synthetase family. Type 1 subfamily. In terms of assembly, homodimer.

It localises to the cytoplasm. The catalysed reaction is tRNA(Asp) + L-aspartate + ATP = L-aspartyl-tRNA(Asp) + AMP + diphosphate. Functionally, catalyzes the attachment of L-aspartate to tRNA(Asp) in a two-step reaction: L-aspartate is first activated by ATP to form Asp-AMP and then transferred to the acceptor end of tRNA(Asp). The sequence is that of Aspartate--tRNA ligase from Streptococcus agalactiae serotype Ia (strain ATCC 27591 / A909 / CDC SS700).